The sequence spans 306 residues: uncharacterized protein (306 aa).

The Cytoplasmic portion of the chain corresponds to 1-6; sequence MRFRQL. A helical transmembrane segment spans residues 7 to 27; it reads LPLFGALFALYIIWGSTYFVI. The 124-residue stretch at 18–141 folds into the EamA 1 domain; sequence IIWGSTYFVI…GLAGIIMLNS (124 aa). Over 28–36 the chain is Periplasmic; it reads RIGVESWPP. Residues 37–57 traverse the membrane as a helical segment; sequence LMMAGVRFLAAGILLLAFLLL. Over 58 to 67 the chain is Cytoplasmic; the sequence is RGHKLPPLRP. Residues 68 to 88 traverse the membrane as a helical segment; it reads LLNAALIGLLLLAVGNGMVTV. Residues 89–93 lie on the Periplasmic side of the membrane; it reads AEHQN. Residues 94–114 traverse the membrane as a helical segment; the sequence is VPSGIAAVVVATVPLFTLCFS. The Cytoplasmic portion of the chain corresponds to 115–125; the sequence is RLFGIKTRKLE. Residues 126–146 form a helical membrane-spanning segment; the sequence is WVGIAIGLAGIIMLNSGGNLS. Residues 147–148 are Periplasmic-facing; the sequence is GN. A helical transmembrane segment spans residues 149–169; sequence PWGAILILIGSISWAFGSVYG. In terms of domain architecture, EamA 2 spans 160-285; sequence ISWAFGSVYG…IVFAVVLVTL (126 aa). Over 170–173 the chain is Cytoplasmic; the sequence is SRIT. The chain crosses the membrane as a helical span at residues 174 to 194; sequence LPVGMMAGAIEMLAAGVVLMI. At 195–206 the chain is on the periplasmic side; it reads ASMIAGEKLTAL. The helical transmembrane segment at 207–227 threads the bilayer; sequence PSLSGFLAVGYLALFGSIIAI. Topologically, residues 228-239 are cytoplasmic; it reads NAYMYLIRNVSP. The helical transmembrane segment at 240–260 threads the bilayer; that stretch reads ALATSYAYVNPVVAVLLGTGL. Topologically, residues 261–269 are periplasmic; the sequence is GGETLSKIE. A helical membrane pass occupies residues 270-290; it reads WLALGVIVFAVVLVTLGKYLF. Topologically, residues 291-306 are cytoplasmic; the sequence is PAKPVVAPVIQDASSE.

The protein belongs to the EamA transporter family.

It is found in the cell inner membrane. This is an uncharacterized protein from Escherichia coli O157:H7.